Reading from the N-terminus, the 83-residue chain is Cell division topological specificity factor (83 aa).

Belongs to the MinE family.

Functionally, prevents the cell division inhibition by proteins MinC and MinD at internal division sites while permitting inhibition at polar sites. This ensures cell division at the proper site by restricting the formation of a division septum at the midpoint of the long axis of the cell. In Marinobacter nauticus (strain ATCC 700491 / DSM 11845 / VT8) (Marinobacter aquaeolei), this protein is Cell division topological specificity factor.